Here is a 276-residue protein sequence, read N- to C-terminus: 2,3,4,5-tetrahydropyridine-2,6-dicarboxylate N-succinyltransferase (276 aa).

The substrate site is built by Arg100 and Asp137.

It belongs to the transferase hexapeptide repeat family. As to quaternary structure, homotrimer.

It localises to the cytoplasm. The enzyme catalyses (S)-2,3,4,5-tetrahydrodipicolinate + succinyl-CoA + H2O = (S)-2-succinylamino-6-oxoheptanedioate + CoA. The protein operates within amino-acid biosynthesis; L-lysine biosynthesis via DAP pathway; LL-2,6-diaminopimelate from (S)-tetrahydrodipicolinate (succinylase route): step 1/3. The protein is 2,3,4,5-tetrahydropyridine-2,6-dicarboxylate N-succinyltransferase of Zymomonas mobilis subsp. mobilis (strain ATCC 31821 / ZM4 / CP4).